Consider the following 107-residue polypeptide: Nucleoid-associated protein XF_1808 (107 aa).

It belongs to the YbaB/EbfC family. In terms of assembly, homodimer.

It is found in the cytoplasm. Its subcellular location is the nucleoid. Its function is as follows. Binds to DNA and alters its conformation. May be involved in regulation of gene expression, nucleoid organization and DNA protection. This Xylella fastidiosa (strain 9a5c) protein is Nucleoid-associated protein XF_1808.